Reading from the N-terminus, the 347-residue chain is MFLVLVVTEELREFLARARNGTGRLIQVLIRDEQLVLGAYREPRHSWDKDYDPVLLPLLDPLEPCYILYRLDSKNAQGYEWLFISWSPDQSPVRQKMLYAATRATVKKEFGGGHVKDEMFGTVEEDICLQGYLRHITSCSAPAPLTVAEQELQRIKITEVKAEISVDPKHQTLQGLAFPLQAEAKRALKQLAERRINYIQLKLDTEKETIDLVHTSPTDIRDLPCRIPLDTPRYHFFLYKHSHEGDYLESVVFIYSMPGYSCSIKERMLYSSCKSRLLDEVERDFHLEVAKKLEIDSGEELTEEYLYDEVHPKQHAHKQAFAKPRGPAGKRGNKRLIKGGGENGGNS.

ADF-H domains are found at residues 3–137 (LVLV…RHIT) and 175–311 (GLAF…DEVH). Positions 314 to 347 (QHAHKQAFAKPRGPAGKRGNKRLIKGGGENGGNS) are disordered. The segment covering 338–347 (KGGGENGGNS) has biased composition (gly residues).

Belongs to the actin-binding proteins ADF family. Twinfilin subfamily. In terms of assembly, interacts with G-actin; ADP-actin form and capping protein (CP).

It localises to the cytoplasm. Its subcellular location is the cytoskeleton. The protein resides in the perinuclear region. Its function is as follows. Actin-binding protein involved in motile and morphological processes. Inhibits actin polymerization, likely by sequestering G-actin. The protein is Twinfilin-2 (twf2) of Danio rerio (Zebrafish).